The following is a 274-amino-acid chain: Putative phosphoenolpyruvate synthase regulatory protein (274 aa).

154-161 (AVSRSGKT) contributes to the ADP binding site.

This sequence belongs to the pyruvate, phosphate/water dikinase regulatory protein family. PSRP subfamily.

The catalysed reaction is [pyruvate, water dikinase] + ADP = [pyruvate, water dikinase]-phosphate + AMP + H(+). It catalyses the reaction [pyruvate, water dikinase]-phosphate + phosphate + H(+) = [pyruvate, water dikinase] + diphosphate. In terms of biological role, bifunctional serine/threonine kinase and phosphorylase involved in the regulation of the phosphoenolpyruvate synthase (PEPS) by catalyzing its phosphorylation/dephosphorylation. In Alkalilimnicola ehrlichii (strain ATCC BAA-1101 / DSM 17681 / MLHE-1), this protein is Putative phosphoenolpyruvate synthase regulatory protein.